Here is a 125-residue protein sequence, read N- to C-terminus: Large ribosomal subunit protein bL12 (125 aa).

This sequence belongs to the bacterial ribosomal protein bL12 family. In terms of assembly, homodimer. Part of the ribosomal stalk of the 50S ribosomal subunit. Forms a multimeric L10(L12)X complex, where L10 forms an elongated spine to which 2 to 4 L12 dimers bind in a sequential fashion. Binds GTP-bound translation factors.

Its function is as follows. Forms part of the ribosomal stalk which helps the ribosome interact with GTP-bound translation factors. Is thus essential for accurate translation. This chain is Large ribosomal subunit protein bL12, found in Rhizobium leguminosarum bv. trifolii (strain WSM2304).